Consider the following 573-residue polypeptide: Isocitrate dehydrogenase kinase/phosphatase (573 aa).

Residues Ala317–Met323 and Lys338 contribute to the ATP site. The active site involves Asp373.

Belongs to the AceK family.

The protein localises to the cytoplasm. The enzyme catalyses L-seryl-[isocitrate dehydrogenase] + ATP = O-phospho-L-seryl-[isocitrate dehydrogenase] + ADP + H(+). Bifunctional enzyme which can phosphorylate or dephosphorylate isocitrate dehydrogenase (IDH) on a specific serine residue. This is a regulatory mechanism which enables bacteria to bypass the Krebs cycle via the glyoxylate shunt in response to the source of carbon. When bacteria are grown on glucose, IDH is fully active and unphosphorylated, but when grown on acetate or ethanol, the activity of IDH declines drastically concomitant with its phosphorylation. This Pseudomonas fluorescens (strain Pf0-1) protein is Isocitrate dehydrogenase kinase/phosphatase.